The chain runs to 317 residues: MSGGLDVLQMKEEDVLKFLAAGTHLGGTNMDFQMEHYTYKRKSDGVYIINLKKTWEKLLLAARAIVAIENPADVCVISSRNTGQRAVLKFASATGATTFHGRFTPGTFTNQIQAAFREPRLLIVTDPRADHQPLTEASYVNIPTIAMCNTDSPLRYVDIAIPCNNKGHHSVGLMWWMLSREVLRMRGTISREHPWEVMPDLYFYRDPEEIEKEEQAAAEKAVGKEEFQGEWTAPTADFAQPEVADWSEGVAVPSVPIQQFPAGIEGKSFTEAAAPSKAPAAAEGFAEDWSAQPATEDWSAAPTAQATEWGGASADWS.

Ser-2 carries the post-translational modification N-acetylserine. 2 laminin-binding regions span residues Ile-161 to Arg-180 and Arg-205 to Gly-229. [DE]-W-[ST] repeat units lie at residues Glu-230–Thr-232 and Asp-245–Ser-247. A laminin-binding region spans residues Glu-242 to Ser-317. Low complexity predominate over residues Glu-271–Gly-284. The interval Glu-271 to Ser-317 is disordered. [DE]-W-[ST] repeat units lie at residues Asp-288–Ser-290, Asp-297–Ser-299, and Asp-315–Ser-317.

It belongs to the universal ribosomal protein uS2 family. Monomer (37LRP) and homodimer (67LR). Component of the small ribosomal subunit. Mature ribosomes consist of a small (40S) and a large (60S) subunit. The 40S subunit contains about 33 different proteins and 1 molecule of RNA (18S). The 60S subunit contains about 49 different proteins and 3 molecules of RNA (28S, 5.8S and 5S). Interacts with rps21. Interacts with several laminins including at least lamb1. Interacts with mdk. Acylated. Acylation may be a prerequisite for conversion of the monomeric 37 kDa laminin receptor precursor (37LRP) to the mature dimeric 67 kDa laminin receptor (67LR), and may provide a mechanism for membrane association. Post-translationally, cleaved by stromelysin-3 (ST3) at the cell surface. Cleavage by stromelysin-3 may be a mechanism to alter cell-extracellular matrix interactions.

It localises to the cell membrane. The protein resides in the cytoplasm. The protein localises to the nucleus. In terms of biological role, required for the assembly and/or stability of the 40S ribosomal subunit. Required for the processing of the 20S rRNA-precursor to mature 18S rRNA in a late step of the maturation of 40S ribosomal subunits. Also functions as a cell surface receptor for laminin. Plays a role in cell adhesion to the basement membrane and in the consequent activation of signaling transduction pathways. May play a role in cell fate determination and tissue morphogenesis. This Salmo salar (Atlantic salmon) protein is Small ribosomal subunit protein uS2 (rpsa).